Here is a 58-residue protein sequence, read N- to C-terminus: uncharacterized protein (58 aa).

The chain crosses the membrane as a helical span at residues 12–32 (VALVYISVYFFSCISLIVYFF).

Its subcellular location is the membrane. This is an uncharacterized protein from Saccharomyces cerevisiae (strain ATCC 204508 / S288c) (Baker's yeast).